Consider the following 229-residue polypeptide: Ribonuclease 3 (229 aa).

An RNase III domain is found at 2-130 (FEKLQDVLCY…ILGAIFLDGG (129 aa)). E43 is a binding site for Mg(2+). D47 is a catalytic residue. 2 residues coordinate Mg(2+): D116 and E119. E119 is a catalytic residue. The DRBM domain maps to 157–226 (DAKSTLQELT…AGLALELLEG (70 aa)).

It belongs to the ribonuclease III family. Homodimer. It depends on Mg(2+) as a cofactor.

The protein resides in the cytoplasm. It carries out the reaction Endonucleolytic cleavage to 5'-phosphomonoester.. Its function is as follows. Digests double-stranded RNA. Involved in the processing of primary rRNA transcript to yield the immediate precursors to the large and small rRNAs (23S and 16S). Processes some mRNAs, and tRNAs when they are encoded in the rRNA operon. Processes pre-crRNA and tracrRNA of type II CRISPR loci if present in the organism. The sequence is that of Ribonuclease 3 from Oleidesulfovibrio alaskensis (strain ATCC BAA-1058 / DSM 17464 / G20) (Desulfovibrio alaskensis).